A 334-amino-acid polypeptide reads, in one-letter code: MDLINEKLNNLENNATKSPKEAVILLNMGGPNSLYEVGVFLKNMFDDPFILTIKNNFMRKMVGKMIVNSRIEKSKKIYEKLGGKSPLTPITFALTERLNKLDPSRFYTYAMRYTPPYASMVLQDLALKEVESLVFFSMYPQYSSTTTLSSFNDAFNALKSLETFRPKVRVIERFYASKKLNKIILNTILNTLNNRKSQDFVLIFSVHGLPKSVIDAGDTYQQECEHHVSLLKELMQQKNTPFKEVLLSYQSKLGPMKWLEPSTEELIEKHRKSHIIIYPLAFTIDNSETLYELDMQYRLMAERLAVKEYLVCPCLNDSIEFAQFIIERVKNLKE.

Residues histidine 207 and glutamate 288 each coordinate Fe cation.

It belongs to the ferrochelatase family.

It is found in the cytoplasm. It carries out the reaction heme b + 2 H(+) = protoporphyrin IX + Fe(2+). It functions in the pathway porphyrin-containing compound metabolism; protoheme biosynthesis; protoheme from protoporphyrin-IX: step 1/1. Functionally, catalyzes the ferrous insertion into protoporphyrin IX. This Helicobacter pylori (strain ATCC 700392 / 26695) (Campylobacter pylori) protein is Ferrochelatase.